The sequence spans 303 residues: Pseudouridine-5'-phosphate glycosidase (303 aa).

The active-site Proton donor is the E24. Residues K85 and V105 each contribute to the substrate site. Residue D137 coordinates Mn(2+). A substrate-binding site is contributed by 139–141 (SAD). The Nucleophile role is filled by K158.

Belongs to the pseudouridine-5'-phosphate glycosidase family. As to quaternary structure, homotrimer. Requires Mn(2+) as cofactor.

The enzyme catalyses D-ribose 5-phosphate + uracil = psi-UMP + H2O. Functionally, catalyzes the reversible cleavage of pseudouridine 5'-phosphate (PsiMP) to ribose 5-phosphate and uracil. Functions biologically in the cleavage direction, as part of a pseudouridine degradation pathway. The polypeptide is Pseudouridine-5'-phosphate glycosidase (Herpetosiphon aurantiacus (strain ATCC 23779 / DSM 785 / 114-95)).